The primary structure comprises 356 residues: Putative zinc finger protein At1g68190 (356 aa).

8 residues coordinate Zn(2+): Cys-14, Cys-17, Cys-37, His-42, Cys-57, Cys-60, Cys-80, and His-85. A B box-type 1; atypical zinc finger spans residues 14-56 (CEFCKAYRAVVYCIADTANLCLTCDAKVHSANSLSGRHLRTVL). The segment at 57-97 (CDSCKNQPCVVRCFDHKMFLCHGCNDKFHGGGSSEHRRRDL) adopts a B box-type 2; atypical zinc-finger fold. The disordered stretch occupies residues 159 to 178 (ENGSSSLTERGDPSPLELPK).

This sequence belongs to the CONSTANS family.

Its subcellular location is the nucleus. This is Putative zinc finger protein At1g68190 from Arabidopsis thaliana (Mouse-ear cress).